The sequence spans 326 residues: Intracellular serine protease (326 aa).

The Peptidase S8 domain maps to 23 to 303; that stretch reads PRGVEMIQAP…NGLLYLTAVE (281 aa). Residues Asp-49, His-86, and Ser-244 each act as charge relay system in the active site.

Belongs to the peptidase S8 family.

In terms of biological role, involved in the generation of beta- and alpha-amylases from the large amylase precursor. The chain is Intracellular serine protease (isp) from Paenibacillus polymyxa (Bacillus polymyxa).